We begin with the raw amino-acid sequence, 407 residues long: Peptidase T (407 aa).

Position 82 (H82) interacts with Zn(2+). D84 is a catalytic residue. Position 143 (D143) interacts with Zn(2+). E177 acts as the Proton acceptor in catalysis. The Zn(2+) site is built by E178, D200, and H382.

Belongs to the peptidase M20B family. Requires Zn(2+) as cofactor.

It localises to the cytoplasm. The enzyme catalyses Release of the N-terminal residue from a tripeptide.. In terms of biological role, cleaves the N-terminal amino acid of tripeptides. This is Peptidase T from Streptococcus thermophilus (strain CNRZ 1066).